Here is a 147-residue protein sequence, read N- to C-terminus: Protein LOL4 (147 aa).

3 putative zinc finger regions span residues 4 to 34 (QLIC…LTAV), 44 to 74 (ELIC…LNST), and 82 to 112 (HLTC…VNHV).

It is found in the nucleus. Putative zinc finger that may be involved in programmed cell death and defense response. This Oryza sativa subsp. japonica (Rice) protein is Protein LOL4 (LOL4).